Reading from the N-terminus, the 703-residue chain is MTTARIPVDELTEEQAKDELARLAQEIGRHDRLYYSEDAPEVSDAEYDALRRRNLAIEQAFPNLIRADSPSKRIGAPAVEKFEKVRHKVPMLSLDNAFTDDDVVDFVARVRRFLKMEPHAPIAMTAEPKIDGLSLSIRYENGRLVSAATRGDGQVGENVTANARAVADIPNVLSGDFPEILEVRGEVYMTHRDFLALNERQRAEGKQTYVNPRNTAAGSLRQLDASITAARPLKFFAYAWGEVSEMPSQTQMGMVEALKSYGFRTNKLMCLCETARELLEHYHAIEERRATLGYDIDGVVYKVNDLALQQRLGYVSRSPRWAIAHKFAAEKAFTILRDIDIQVGRTGALTPVARLEPVTVGGVVVTNATLHNAEEIERLGIKIGDTVQVQRAGDVIPQILGYAEDRRPADAKEFVFPSVCPCELKTPVVRDSTAGGGEGVVRRCSGEFACPFQRIEHLRLFVSRRAFDIEGLGEKQIEFFFRDPDLPVKSPADIFTLAERDAQNIKKLKDKEGWGTVSAGNLFAAIEAKRTIPLDRMIYGLGIRHVGERTAVTLARGYGSWKAFHDSALAIAGGDLSAREEMDALEDIGDAVIDAIATYFAEEHNCRLVEALAAQVNVLEAERPVADSPVAGKTIVFTGALERMSRDEAKDMAERLGAKVAGSVSSKTDLVVAGPGAGSKLKKAAELGIEVIDEDMWFQRIGA.

Residues 44–48 (DAEYD), 93–94 (SL), and Glu-127 each bind NAD(+). The active-site N6-AMP-lysine intermediate is Lys-129. Residues Arg-150, Glu-186, Lys-302, and Lys-326 each coordinate NAD(+). 4 residues coordinate Zn(2+): Cys-420, Cys-422, Cys-444, and Cys-450. The 79-residue stretch at 625-703 (VADSPVAGKT…EDMWFQRIGA (79 aa)) folds into the BRCT domain.

The protein belongs to the NAD-dependent DNA ligase family. LigA subfamily. Mg(2+) is required as a cofactor. The cofactor is Mn(2+).

It carries out the reaction NAD(+) + (deoxyribonucleotide)n-3'-hydroxyl + 5'-phospho-(deoxyribonucleotide)m = (deoxyribonucleotide)n+m + AMP + beta-nicotinamide D-nucleotide.. Its function is as follows. DNA ligase that catalyzes the formation of phosphodiester linkages between 5'-phosphoryl and 3'-hydroxyl groups in double-stranded DNA using NAD as a coenzyme and as the energy source for the reaction. It is essential for DNA replication and repair of damaged DNA. The polypeptide is DNA ligase (Chelativorans sp. (strain BNC1)).